The following is a 20-amino-acid chain: Haemoporin (20 aa).

The tract at residues Ala-1 to Phe-20 is disordered.

Homopentamer. Forms a cylindrical structure with a central pore. In terms of tissue distribution, detected in the hemolymph.

The protein localises to the secreted. This Aplysia californica (California sea hare) protein is Haemoporin.